Reading from the N-terminus, the 332-residue chain is Biotin synthase (332 aa).

The Radical SAM core domain occupies 53-282 (YFGKKVKLNM…SKEIRISGGR (230 aa)). Cys-71, Cys-75, and Cys-78 together coordinate [4Fe-4S] cluster. [2Fe-2S] cluster-binding residues include Cys-115, Cys-147, Cys-207, and Arg-277.

This sequence belongs to the radical SAM superfamily. Biotin synthase family. As to quaternary structure, homodimer. [4Fe-4S] cluster serves as cofactor. It depends on [2Fe-2S] cluster as a cofactor.

It carries out the reaction (4R,5S)-dethiobiotin + (sulfur carrier)-SH + 2 reduced [2Fe-2S]-[ferredoxin] + 2 S-adenosyl-L-methionine = (sulfur carrier)-H + biotin + 2 5'-deoxyadenosine + 2 L-methionine + 2 oxidized [2Fe-2S]-[ferredoxin]. It functions in the pathway cofactor biosynthesis; biotin biosynthesis; biotin from 7,8-diaminononanoate: step 2/2. Catalyzes the conversion of dethiobiotin (DTB) to biotin by the insertion of a sulfur atom into dethiobiotin via a radical-based mechanism. This Bacillus cytotoxicus (strain DSM 22905 / CIP 110041 / 391-98 / NVH 391-98) protein is Biotin synthase.